A 304-amino-acid polypeptide reads, in one-letter code: N-acetylmuramic acid 6-phosphate etherase (304 aa).

Residues 62–225 (IVEAFQQGGR…TTASMILIGK (164 aa)) form the SIS domain. The Proton donor role is filled by Glu90. Residue Glu121 is part of the active site.

This sequence belongs to the GCKR-like family. MurNAc-6-P etherase subfamily. As to quaternary structure, homodimer.

It catalyses the reaction N-acetyl-D-muramate 6-phosphate + H2O = N-acetyl-D-glucosamine 6-phosphate + (R)-lactate. It participates in amino-sugar metabolism; 1,6-anhydro-N-acetylmuramate degradation. Its pathway is amino-sugar metabolism; N-acetylmuramate degradation. The protein operates within cell wall biogenesis; peptidoglycan recycling. Functionally, specifically catalyzes the cleavage of the D-lactyl ether substituent of MurNAc 6-phosphate, producing GlcNAc 6-phosphate and D-lactate. Together with AnmK, is also required for the utilization of anhydro-N-acetylmuramic acid (anhMurNAc) either imported from the medium or derived from its own cell wall murein, and thus plays a role in cell wall recycling. This is N-acetylmuramic acid 6-phosphate etherase from Glaesserella parasuis serovar 5 (strain SH0165) (Haemophilus parasuis).